Here is a 293-residue protein sequence, read N- to C-terminus: Bifunctional protein FolD (293 aa).

NADP(+) contacts are provided by residues 165 to 167 (GRS), Thr194, and Val235.

This sequence belongs to the tetrahydrofolate dehydrogenase/cyclohydrolase family. As to quaternary structure, homodimer.

The catalysed reaction is (6R)-5,10-methylene-5,6,7,8-tetrahydrofolate + NADP(+) = (6R)-5,10-methenyltetrahydrofolate + NADPH. It carries out the reaction (6R)-5,10-methenyltetrahydrofolate + H2O = (6R)-10-formyltetrahydrofolate + H(+). It functions in the pathway one-carbon metabolism; tetrahydrofolate interconversion. In terms of biological role, catalyzes the oxidation of 5,10-methylenetetrahydrofolate to 5,10-methenyltetrahydrofolate and then the hydrolysis of 5,10-methenyltetrahydrofolate to 10-formyltetrahydrofolate. This chain is Bifunctional protein FolD, found in Syntrophus aciditrophicus (strain SB).